We begin with the raw amino-acid sequence, 160 residues long: Ribosome maturation factor RimP (160 aa).

This sequence belongs to the RimP family.

It is found in the cytoplasm. Required for maturation of 30S ribosomal subunits. This chain is Ribosome maturation factor RimP, found in Orientia tsutsugamushi (strain Ikeda) (Rickettsia tsutsugamushi).